A 317-amino-acid polypeptide reads, in one-letter code: MKVALLGAAGGIGQTLALLLKLRLPVGTDLALYDISPVTPGIAVDISHIPTSVSAVGYSGEDPSEALKGANLVIITAGVARKPGMTRADLFNINADIVKNLVEKVAEVCPKACIGIVTNPVNTLVPIAAEVLRKAGVYDKRKLFGVTTLDVVRAKTFTSELKEKHVETVKVPVIGGHSGPTILPLLSQALSEGLPLSFTQEEIEALTYRIQNAGTEVVEAKAGGGSATLSMAESGARFAVAVFKALLGEDCVRYAYVESKEGSGYPEFFAHPVRFGLTGVEELLPIGKLSEYEQAKLDELKPVLEADIALGKNFVNP.

Residues G7–G13 and D34 each bind NAD(+). The substrate site is built by R81 and R87. Residues N94 and V117 to N119 each bind NAD(+). Substrate-binding residues include N119 and R153. The active-site Proton acceptor is the H177. An NAD(+)-binding site is contributed by M231.

This sequence belongs to the LDH/MDH superfamily. MDH type 1 family. In terms of assembly, homodimer.

The catalysed reaction is (S)-malate + NAD(+) = oxaloacetate + NADH + H(+). Catalyzes the reversible oxidation of malate to oxaloacetate. The protein is Malate dehydrogenase of Actinobacillus pleuropneumoniae serotype 7 (strain AP76).